Here is a 138-residue protein sequence, read N- to C-terminus: MNIIDNFEQENIAKLTANKKIPDFEAGDTVKVTVKIIDKAIEKDGKEKLTERFQAYEGVVIAKRNRGITSSFLVRKISHGEGVERRFMTYSPIVHSIDVVKYGVVRRAKLYYLRHRNGKAARIREKLISRAKPKTAIS.

It belongs to the bacterial ribosomal protein bL19 family.

Functionally, this protein is located at the 30S-50S ribosomal subunit interface and may play a role in the structure and function of the aminoacyl-tRNA binding site. The sequence is that of Large ribosomal subunit protein bL19 (rplS) from Rickettsia prowazekii (strain Madrid E).